We begin with the raw amino-acid sequence, 539 residues long: MAKIIAFDEDARRGLERGLNILADTVKVTLGPGGCNVVLEKKWGAPTITNDGVSIAKEIELDDPYEKIGAELVKEVAKKTDDVAGDGTTTATVLAQALVKEGLRNVAAGADPISLKRGIEKAVEAVTAELVGNAKEVESKAQIAATASISAGDTTIGDIIAEAIDKVGKEGVVTVEESNTFGTELELTEGMRFDKGFLSQYFVTDQDRQEAVFEDAYILIANQKISSIKDLLPIVDKVIQANKQLLIIAEDVDGEALATLIVNKIRGIFKSVAVKAPGFGDRRKAMLQDIAILTGGQVISEEVGLKLENVTLDLLGKARKVVITKDETTIVEGAGDPDQIAGRVAQIRGEIDNSDSDYDREKLQERLAKLAGGVAVIKAGAATEVELKERKHRIEDAVRNAKAAVEEGIVAGGGVALIQAGKLAFEKLSLEGDEATGANIVKVAIEAPMKQIAINAGMEPGVVVARVRELPLGHGLNAATGEYVDMLIAGINDPVKVTRSALQNAASIAGLFLTTEAVVADKPEKAAPVAAEPGAGMDF.

Residues 29 to 32 (TLGP), 86 to 90 (DGTTT), glycine 413, 477 to 479 (NAA), and aspartate 493 each bind ATP.

It belongs to the chaperonin (HSP60) family. Forms a cylinder of 14 subunits composed of two heptameric rings stacked back-to-back. Interacts with the co-chaperonin GroES.

The protein localises to the cytoplasm. It catalyses the reaction ATP + H2O + a folded polypeptide = ADP + phosphate + an unfolded polypeptide.. Together with its co-chaperonin GroES, plays an essential role in assisting protein folding. The GroEL-GroES system forms a nano-cage that allows encapsulation of the non-native substrate proteins and provides a physical environment optimized to promote and accelerate protein folding. This chain is Chaperonin GroEL, found in Leifsonia xyli subsp. xyli (strain CTCB07).